A 209-amino-acid polypeptide reads, in one-letter code: Outer-membrane lipoprotein carrier protein (209 aa).

The first 21 residues, 1 to 21 (MHRQLRYAVLATALFASTAFA), serve as a signal peptide directing secretion.

It belongs to the LolA family. Monomer.

Its subcellular location is the periplasm. Participates in the translocation of lipoproteins from the inner membrane to the outer membrane. Only forms a complex with a lipoprotein if the residue after the N-terminal Cys is not an aspartate (The Asp acts as a targeting signal to indicate that the lipoprotein should stay in the inner membrane). This chain is Outer-membrane lipoprotein carrier protein, found in Xanthomonas axonopodis pv. citri (strain 306).